Reading from the N-terminus, the 223-residue chain is Small ribosomal subunit protein uS11m (223 aa).

The N-terminal 38 residues, 1-38, are a transit peptide targeting the mitochondrion; it reads MVLKHSVTYNLSFFISFTFSSIFFSSLILFLVYKSVLS.

It belongs to the universal ribosomal protein uS11 family. As to quaternary structure, component of the mitochondrial small ribosomal subunit (mt-SSU). Mature yeast 74S mitochondrial ribosomes consist of a small (37S) and a large (54S) subunit. The 37S small subunit contains a 15S ribosomal RNA (15S mt-rRNA) and at least 32 different proteins. The 54S large subunit contains a 21S rRNA (21S mt-rRNA) and at least 45 different proteins.

The protein resides in the mitochondrion. Its function is as follows. Component of the mitochondrial ribosome (mitoribosome), a dedicated translation machinery responsible for the synthesis of mitochondrial genome-encoded proteins, including at least some of the essential transmembrane subunits of the mitochondrial respiratory chain. The mitoribosomes are attached to the mitochondrial inner membrane and translation products are cotranslationally integrated into the membrane. The polypeptide is Small ribosomal subunit protein uS11m (mrps18) (Schizosaccharomyces pombe (strain 972 / ATCC 24843) (Fission yeast)).